The following is a 269-amino-acid chain: 5'-nucleotidase SurE (269 aa).

Residues aspartate 11, aspartate 12, serine 43, and asparagine 101 each contribute to the a divalent metal cation site.

This sequence belongs to the SurE nucleotidase family. It depends on a divalent metal cation as a cofactor.

It is found in the cytoplasm. It catalyses the reaction a ribonucleoside 5'-phosphate + H2O = a ribonucleoside + phosphate. Functionally, nucleotidase that shows phosphatase activity on nucleoside 5'-monophosphates. The sequence is that of 5'-nucleotidase SurE from Synechococcus sp. (strain CC9605).